The chain runs to 252 residues: tRNA pseudouridine synthase A (252 aa).

Asp-52 acts as the Nucleophile in catalysis. Position 112 (Tyr-112) interacts with substrate.

It belongs to the tRNA pseudouridine synthase TruA family. As to quaternary structure, homodimer.

The catalysed reaction is uridine(38/39/40) in tRNA = pseudouridine(38/39/40) in tRNA. Formation of pseudouridine at positions 38, 39 and 40 in the anticodon stem and loop of transfer RNAs. The protein is tRNA pseudouridine synthase A of Porphyromonas gingivalis (strain ATCC 33277 / DSM 20709 / CIP 103683 / JCM 12257 / NCTC 11834 / 2561).